Reading from the N-terminus, the 342-residue chain is S-adenosylmethionine:tRNA ribosyltransferase-isomerase (342 aa).

The protein belongs to the QueA family. Monomer.

It localises to the cytoplasm. It carries out the reaction 7-aminomethyl-7-carbaguanosine(34) in tRNA + S-adenosyl-L-methionine = epoxyqueuosine(34) in tRNA + adenine + L-methionine + 2 H(+). It participates in tRNA modification; tRNA-queuosine biosynthesis. Transfers and isomerizes the ribose moiety from AdoMet to the 7-aminomethyl group of 7-deazaguanine (preQ1-tRNA) to give epoxyqueuosine (oQ-tRNA). The protein is S-adenosylmethionine:tRNA ribosyltransferase-isomerase of Streptococcus pyogenes serotype M12 (strain MGAS2096).